Reading from the N-terminus, the 300-residue chain is Dipeptide transport system permease protein DppC (300 aa).

Over 1–31 (MSQVTENKVISAPVPMTPLQEFWHYFKRNKG) the chain is Cytoplasmic. The chain crosses the membrane as a helical span at residues 32–52 (AVVGLVYVVIVLFIAIFANWI). At 53–101 (APYNPAEQFRDALLAPPAWQEGGSMAHLLGTDDVGRDVLSRLMYGARLS) the chain is on the periplasmic side. The ABC transmembrane type-1 domain occupies 98-287 (ARLSLLVGCL…LTVLAFNLMG (190 aa)). The chain crosses the membrane as a helical span at residues 102–122 (LLVGCLVVVLSLIMGVILGLI). Topologically, residues 123–136 (AGYFGGLVDNIIMR) are cytoplasmic. A helical transmembrane segment spans residues 137–157 (VVDIMLALPSLLLALVLVAIF). Residues 158 to 206 (GPSIGNAALALTFVALPHYVRLTRAAVLVEVNRDYVTASRVAGAGAMRQ) are Periplasmic-facing. A helical membrane pass occupies residues 207–227 (MFINIFPNCLAPLIVQASLGF). At 228–230 (SNA) the chain is on the cytoplasmic side. A helical membrane pass occupies residues 231-251 (ILDMAALGFLGMGAQPPTPEW). Residues 252–265 (GTMLSDVLQFAQSA) are Periplasmic-facing. The helical transmembrane segment at 266–286 (WWVVTFPGLAILLTVLAFNLM) threads the bilayer. The Cytoplasmic portion of the chain corresponds to 287–300 (GDGLRDALDPKLKQ).

It belongs to the binding-protein-dependent transport system permease family. OppBC subfamily. As to quaternary structure, the complex is composed of two ATP-binding proteins (DppD and DppF), two transmembrane proteins (DppB and DppC) and a solute-binding protein (DppA).

It localises to the cell inner membrane. Part of the ABC transporter DppABCDF involved in dipeptide transport. Responsible for the translocation of the substrate across the membrane. This chain is Dipeptide transport system permease protein DppC (dppC), found in Escherichia coli O157:H7.